Here is a 405-residue protein sequence, read N- to C-terminus: Succinyl-CoA--L-malate CoA-transferase beta subunit (405 aa).

Catalysis depends on Asp175, which acts as the Nucleophile.

Belongs to the CoA-transferase III family. As to quaternary structure, forms a large complex composed of six heterodimers (alpha, beta).

The catalysed reaction is succinyl-CoA + (S)-malate = (S)-malyl-CoA + succinate. It catalyses the reaction (3S)-citramalate + succinyl-CoA = (3S)-citramalyl-CoA + succinate. Its function is as follows. Involved in the 3-hydroxypropionate cycle used for autotrophic carbon dioxide fixation. Catalyzes the transfer of CoA moiety from succinyl-CoA to L-malate to yield L-malyl-CoA. The sequence is that of Succinyl-CoA--L-malate CoA-transferase beta subunit (smtB) from Chloroflexus aurantiacus (strain ATCC 29366 / DSM 635 / J-10-fl).